Here is a 102-residue protein sequence, read N- to C-terminus: Small ribosomal subunit protein uS10 (102 aa).

Belongs to the universal ribosomal protein uS10 family. Part of the 30S ribosomal subunit.

Functionally, involved in the binding of tRNA to the ribosomes. This chain is Small ribosomal subunit protein uS10, found in Mesorhizobium japonicum (strain LMG 29417 / CECT 9101 / MAFF 303099) (Mesorhizobium loti (strain MAFF 303099)).